Reading from the N-terminus, the 148-residue chain is Transcriptional repressor NrdR (148 aa).

The tract at residues 1–22 is disordered; sequence MKCPYCSAPDSKVVNSRPSDDG. A zinc finger spans residues 3 to 34; it reads CPYCSAPDSKVVNSRPSDDGASIRRRRECLNC. In terms of domain architecture, ATP-cone spans 49 to 136; it reads LMVVKRSGPR…VYRDFDSLER (88 aa).

It belongs to the NrdR family. The cofactor is Zn(2+).

In terms of biological role, negatively regulates transcription of bacterial ribonucleotide reductase nrd genes and operons by binding to NrdR-boxes. This chain is Transcriptional repressor NrdR, found in Deinococcus deserti (strain DSM 17065 / CIP 109153 / LMG 22923 / VCD115).